A 156-amino-acid chain; its full sequence is E3 ubiquitin-protein ligase RNF181 (156 aa).

The RING-type; atypical zinc-finger motif lies at 79-120; the sequence is CPVCLLEFEEGETVRQLPCEHLFHSACILPWLGKTNSCPLCR.

The protein belongs to the RNF181 family.

The catalysed reaction is S-ubiquitinyl-[E2 ubiquitin-conjugating enzyme]-L-cysteine + [acceptor protein]-L-lysine = [E2 ubiquitin-conjugating enzyme]-L-cysteine + N(6)-ubiquitinyl-[acceptor protein]-L-lysine.. It functions in the pathway protein modification; protein ubiquitination. Its function is as follows. E3 ubiquitin-protein ligase which accepts ubiquitin from an E2 ubiquitin-conjugating enzyme in the form of a thioester and then directly transfers the ubiquitin to targeted substrates. Catalyzes monoubiquitination of 26S proteasome subunit PSMC2/RPT1. The polypeptide is E3 ubiquitin-protein ligase RNF181 (rnf181) (Xenopus laevis (African clawed frog)).